We begin with the raw amino-acid sequence, 161 residues long: Large ribosomal subunit protein uL10 (161 aa).

Belongs to the universal ribosomal protein uL10 family. As to quaternary structure, part of the ribosomal stalk of the 50S ribosomal subunit. The N-terminus interacts with L11 and the large rRNA to form the base of the stalk. The C-terminus forms an elongated spine to which L12 dimers bind in a sequential fashion forming a multimeric L10(L12)X complex.

Functionally, forms part of the ribosomal stalk, playing a central role in the interaction of the ribosome with GTP-bound translation factors. In Mycoplasma pneumoniae (strain ATCC 29342 / M129 / Subtype 1) (Mycoplasmoides pneumoniae), this protein is Large ribosomal subunit protein uL10 (rplJ).